A 239-amino-acid polypeptide reads, in one-letter code: Uridylate kinase (239 aa).

10-13 (KLSG) serves as a coordination point for ATP. The involved in allosteric activation by GTP stretch occupies residues 18–23 (GEQGYG). Residue Gly52 coordinates UMP. Residues Gly53 and Arg57 each coordinate ATP. Residues Asp72 and 133 to 140 (TGNPYFST) contribute to the UMP site. ATP-binding residues include Asn161, Tyr167, and Glu170.

The protein belongs to the UMP kinase family. Homohexamer.

The protein resides in the cytoplasm. It carries out the reaction UMP + ATP = UDP + ADP. The protein operates within pyrimidine metabolism; CTP biosynthesis via de novo pathway; UDP from UMP (UMPK route): step 1/1. Its activity is regulated as follows. Allosterically activated by GTP. Inhibited by UTP. Catalyzes the reversible phosphorylation of UMP to UDP. The chain is Uridylate kinase from Halalkalibacterium halodurans (strain ATCC BAA-125 / DSM 18197 / FERM 7344 / JCM 9153 / C-125) (Bacillus halodurans).